The sequence spans 436 residues: GTPase Der (436 aa).

EngA-type G domains follow at residues 4–167 (PVVA…PKRG) and 176–351 (IKFC…ENHA). GTP is bound by residues 10 to 17 (GRPNVGKS), 57 to 61 (DTGGI), 119 to 122 (NKID), 182 to 189 (GRPNVGKS), 229 to 233 (DTAGM), and 294 to 297 (NKWD). The 85-residue stretch at 352–436 (MRVQTNVLNE…PIKIIARPRK (85 aa)) folds into the KH-like domain.

The protein belongs to the TRAFAC class TrmE-Era-EngA-EngB-Septin-like GTPase superfamily. EngA (Der) GTPase family. As to quaternary structure, associates with the 50S ribosomal subunit.

In terms of biological role, GTPase that plays an essential role in the late steps of ribosome biogenesis. The polypeptide is GTPase Der (Geobacillus sp. (strain WCH70)).